A 217-amino-acid polypeptide reads, in one-letter code: External core antigen (217 aa).

A signal peptide spans 1-20 (MYLFHLCLVFACVSCPTVQA). Residues 26-28 (GWL) are HBEAG. Residues 181–210 (RRGSARVVRSPRRRTPSPRRRRSQSPRRRP) are compositionally biased toward basic residues. The segment at 181 to 217 (RRGSARVVRSPRRRTPSPRRRRSQSPRRRPQSPASNC) is disordered. The 1; half-length repeat unit spans residues 190–196 (SPRRRTP). Residues 190–211 (SPRRRTPSPRRRRSQSPRRRPQ) are 3 X 8 AA approximate repeats of S-P-R-R-R-R-[PS]-Q. Positions 190-217 (SPRRRTPSPRRRRSQSPRRRPQSPASNC) are excised as a propeptide. 2 tandem repeats follow at residues 197 to 204 (SPRRRRSQ) and 205 to 211 (SPRRRPQ).

It belongs to the orthohepadnavirus precore antigen family. As to quaternary structure, homodimerizes. Post-translationally, phosphorylated. In terms of processing, cleaved by host furin.

It is found in the secreted. It localises to the host nucleus. May regulate immune response to the intracellular capsid in acting as a T-cell tolerogen, by having an immunoregulatory effect which prevents destruction of infected cells by cytotoxic T-cells. This immune regulation may predispose to chronicity during perinatal infections and prevent severe liver injury during adult infections. The protein is External core antigen of Urocitellus parryii kennicottii (ASHV).